We begin with the raw amino-acid sequence, 442 residues long: Protein translocase subunit SecY (442 aa).

10 consecutive transmembrane segments (helical) span residues 24–44, 76–96, 125–145, 149–169, 178–198, 212–232, 269–289, 312–332, 363–383, and 385–405; these read FLFL…PGIN, IFAL…LMTA, VLAL…GVAF, FGFY…MMWL, VGNG…PRAI, IFAL…VVFI, VIPA…GSWF, NILL…ALMF, GVLT…CLLP, and FLVV…LIVV.

This sequence belongs to the SecY/SEC61-alpha family. Component of the Sec protein translocase complex. Heterotrimer consisting of SecY, SecE and SecG subunits. The heterotrimers can form oligomers, although 1 heterotrimer is thought to be able to translocate proteins. Interacts with the ribosome. Interacts with SecDF, and other proteins may be involved. Interacts with SecA.

It is found in the cell inner membrane. In terms of biological role, the central subunit of the protein translocation channel SecYEG. Consists of two halves formed by TMs 1-5 and 6-10. These two domains form a lateral gate at the front which open onto the bilayer between TMs 2 and 7, and are clamped together by SecE at the back. The channel is closed by both a pore ring composed of hydrophobic SecY resides and a short helix (helix 2A) on the extracellular side of the membrane which forms a plug. The plug probably moves laterally to allow the channel to open. The ring and the pore may move independently. The protein is Protein translocase subunit SecY of Pseudomonas aeruginosa (strain ATCC 15692 / DSM 22644 / CIP 104116 / JCM 14847 / LMG 12228 / 1C / PRS 101 / PAO1).